Consider the following 478-residue polypeptide: Septin-4 (478 aa).

Disordered stretches follow at residues Asp-40–Asp-74 and Ala-87–Tyr-115. The span at Ala-95–Pro-108 shows a compositional bias: low complexity. A phosphoserine mark is found at Ser-117 and Ser-118. Residues Lys-141–Ser-414 enclose the Septin-type G domain. Positions Gly-151–Ser-158 are G1 motif. GTP-binding positions include Gly-151 to Ser-158 and Thr-185. The tract at residues Asp-208 to Gly-211 is G3 motif. The interval Ala-289–Asp-292 is G4 motif. Lys-290–Glu-298 lines the GTP pocket. Ser-325 carries the phosphoserine modification. Positions 348 and 363 each coordinate GTP. Residues Leu-428 to Glu-448 are disordered. Ser-432 carries the phosphoserine modification. Position 434 is a phosphothreonine (Thr-434). A coiled-coil region spans residues Asp-446–Tyr-478.

This sequence belongs to the TRAFAC class TrmE-Era-EngA-EngB-Septin-like GTPase superfamily. Septin GTPase family. As to quaternary structure, septins polymerize into heterooligomeric protein complexes that form filaments, and can associate with cellular membranes, actin filaments and microtubules. GTPase activity is required for filament formation. Interacts with SEPTIN8. Component of a septin core octameric complex consisting of SEPTIN12, SEPTIN7, SEPTIN6 and SEPTIN2 or SEPTIN4 in the order 12-7-6-2-2-6-7-12 or 12-7-6-4-4-6-7-12. Interacts with SEPTIN14 (via C-terminus). Interacts with DYRK1A. Interacts with SLC6A3/DAT and SNCA/alpha-synuclein. Interacts with STX1A; in the striatum. Interacts with XIAP (via BIR3 domain) following the induction of apoptosis. Interacts with AREL1 (via HECT domain); in the cytoplasm following induction of apoptosis. Post-translationally, ubiquitinated by AREL1. In terms of processing, phosphorylated by DYRK1A.

The protein localises to the cytoplasm. Its subcellular location is the cell projection. It is found in the cilium. The protein resides in the flagellum. It localises to the cytoplasmic vesicle. The protein localises to the secretory vesicle. Its subcellular location is the axon. It is found in the dendrite. The protein resides in the perikaryon. It localises to the synapse. Filament-forming cytoskeletal GTPase. Pro-apoptotic protein involved in LGR5-positive intestinal stem cell and Paneth cell expansion in the intestines, via its interaction with XIAP. May also play a role in the regulation of cell fate in the intestine. Positive regulator of apoptosis involved in hematopoietic stem cell homeostasis; via its interaction with XIAP. Negative regulator of repair and hair follicle regeneration in response to injury, due to inhibition of hair follicle stem cell proliferation, potentially via its interaction with XIAP. Plays an important role in male fertility and sperm motility. During spermiogenesis, essential for the establishment of the annulus (a fibrous ring structure connecting the midpiece and the principal piece of the sperm flagellum) which is a requisite for the structural and mechanical integrity of the sperm. Involved in the migration of cortical neurons and the formation of neuron leading processes during embryonic development. Required for dopaminergic metabolism in presynaptic autoreceptors; potentially via activity as a presynaptic scaffold protein. This is Septin-4 from Macaca fascicularis (Crab-eating macaque).